A 311-amino-acid polypeptide reads, in one-letter code: HPr kinase/phosphorylase (311 aa).

Residues His-139 and Lys-160 contribute to the active site. 154 to 161 (GASGVGKS) serves as a coordination point for ATP. Residue Ser-161 participates in Mg(2+) binding. Asp-178 acts as the Proton acceptor; for phosphorylation activity. Proton donor; for dephosphorylation activity in catalysis. Residues 202–211 (LEIRGIGIID) are important for the catalytic mechanism of both phosphorylation and dephosphorylation. Glu-203 lines the Mg(2+) pocket. The active site involves Arg-244. The interval 265 to 270 (PVRPGR) is important for the catalytic mechanism of dephosphorylation.

The protein belongs to the HPrK/P family. As to quaternary structure, homohexamer. Mg(2+) is required as a cofactor.

The catalysed reaction is [HPr protein]-L-serine + ATP = [HPr protein]-O-phospho-L-serine + ADP + H(+). It carries out the reaction [HPr protein]-O-phospho-L-serine + phosphate + H(+) = [HPr protein]-L-serine + diphosphate. In terms of biological role, catalyzes the ATP- as well as the pyrophosphate-dependent phosphorylation of a specific serine residue in HPr, a phosphocarrier protein of the phosphoenolpyruvate-dependent sugar phosphotransferase system (PTS). HprK/P also catalyzes the pyrophosphate-producing, inorganic phosphate-dependent dephosphorylation (phosphorolysis) of seryl-phosphorylated HPr (P-Ser-HPr). The two antagonistic activities of HprK/P are regulated by several intracellular metabolites, which change their concentration in response to the absence or presence of rapidly metabolisable carbon sources (glucose, fructose, etc.) in the growth medium. Therefore, by controlling the phosphorylation state of HPr, HPrK/P is a sensor enzyme that plays a major role in the regulation of carbon metabolism and sugar transport: it mediates carbon catabolite repression (CCR), and regulates PTS-catalyzed carbohydrate uptake and inducer exclusion. The protein is HPr kinase/phosphorylase of Exiguobacterium sibiricum (strain DSM 17290 / CCUG 55495 / CIP 109462 / JCM 13490 / 255-15).